The sequence spans 435 residues: Serine/threonine-protein kinase 40 (435 aa).

The Protein kinase domain maps to 35-332; the sequence is FVLGPRLGNS…DVLEALSAII (298 aa). ATP is bound by residues 41 to 49 and lysine 66; that span reads LGNSPVPSI. Residue aspartate 197 is the Proton acceptor of the active site.

It belongs to the protein kinase superfamily. CAMK Ser/Thr protein kinase family.

It is found in the nucleus. It localises to the cytoplasm. The enzyme catalyses L-seryl-[protein] + ATP = O-phospho-L-seryl-[protein] + ADP + H(+). It carries out the reaction L-threonyl-[protein] + ATP = O-phospho-L-threonyl-[protein] + ADP + H(+). May be a negative regulator of NF-kappa-B and p53-mediated gene transcription. The polypeptide is Serine/threonine-protein kinase 40 (Stk40) (Mus musculus (Mouse)).